The chain runs to 1377 residues: Hemoglobin-binding protease hbp autotransporter (1377 aa).

The signal sequence occupies residues 1–52 (MNRIYSLRYSAVARGFIAVSEFARKCVHKSVRRLCFPVLLLIPVLFSAGSLA). Positions 53–302 (GTVNNELGYQ…AVIPLDFIGQ (250 aa)) constitute a Peptidase S6 domain. Active-site charge relay system residues include His-125, Asp-153, and Ser-259. Positions 1111-1377 (DINGEAGTWV…AINANIRYSF (267 aa)) constitute an Autotransporter domain.

Post-translationally, cleaved to release the mature protein from the outer membrane.

It is found in the periplasm. The protein resides in the secreted. It localises to the cell surface. The protein localises to the cell outer membrane. Its activity is regulated as follows. Protease activity is inhibited by 3,4-dichloroisocoumarin. In terms of biological role, interacts with hemoglobin, degrades it and subsequently binds the released heme. Could make heme accessible not only for E.coli, but also for B.fragilis during mixed intra-abdominal infections. Has a role in abscess formation. This Escherichia coli protein is Hemoglobin-binding protease hbp autotransporter (hbp).